The sequence spans 1365 residues: Patatin-like phospholipase domain-containing protein 6 (1365 aa).

The Lumenal segment spans residues 1-50 (MGTSSHGLATNSSGAKVAERDGFQDVPAPGEGAAGRICGAQPVPFVPQVL). N-linked (GlcNAc...) asparagine glycosylation occurs at asparagine 11. The chain crosses the membrane as a helical span at residues 51 to 71 (GVMIGAGVAVVVTAVLILLVV). The Cytoplasmic segment spans residues 72–1365 (RRLRVPKTPA…QEPPGSATDA (1294 aa)). 186–313 (VLGHFEKPLF…VRVVQIIMVR (128 aa)) serves as a coordination point for a nucleoside 3',5'-cyclic phosphate. 2 disordered regions span residues 343–427 (FPSP…RSDF) and 441–463 (QEGA…PREQ). A Phosphoserine modification is found at serine 345. A compositionally biased stretch (polar residues) spans 350 to 367 (TRTSPVRGSKRMVSTSAT). Phosphothreonine is present on threonine 352. Residues serine 353 and serine 363 each carry the phosphoserine modification. The segment covering 375–389 (GRPPDPTGAPLPGPT) has biased composition (pro residues). Serine 411 bears the Phosphoserine mark. Threonine 455 is modified (phosphothreonine). A nucleoside 3',5'-cyclic phosphate-binding positions include 502–624 (ELAK…VAAR) and 620–740 (TVAA…LSQK). The PNPLA domain maps to 971-1137 (LVLGGGGARG…INNLPADIAR (167 aa)). A GXGXXG motif is present at residues 975-980 (GGGARG). A GXSXG motif is present at residues 1002 to 1006 (GTSIG). Catalysis depends on serine 1004, which acts as the Nucleophile. Aspartate 1124 acts as the Proton acceptor in catalysis. The DGA/G motif lies at 1124–1126 (DGG). The disordered stretch occupies residues 1296-1365 (SYVSDGCADG…QEPPGSATDA (70 aa)). Residues 1303–1319 (ADGEESDCLTEYEEDAG) show a composition bias toward acidic residues.

The protein belongs to the NTE family. Glycosylated.

Its subcellular location is the endoplasmic reticulum membrane. The enzyme catalyses a 1-acyl-sn-glycero-3-phosphocholine + H2O = sn-glycerol 3-phosphocholine + a fatty acid + H(+). It carries out the reaction 1-hexadecanoyl-sn-glycero-3-phosphocholine + H2O = sn-glycerol 3-phosphocholine + hexadecanoate + H(+). The catalysed reaction is 1-(9Z-octadecenoyl)-sn-glycero-3-phosphocholine + H2O = sn-glycerol 3-phosphocholine + (9Z)-octadecenoate + H(+). It catalyses the reaction 1-hexadecanoylglycerol + H2O = glycerol + hexadecanoate + H(+). The enzyme catalyses 2-hexadecanoylglycerol + H2O = glycerol + hexadecanoate + H(+). It carries out the reaction 1-(9Z-octadecenoyl)-glycerol + H2O = glycerol + (9Z)-octadecenoate + H(+). The catalysed reaction is 2-(9Z-octadecenoyl)-glycerol + H2O = glycerol + (9Z)-octadecenoate + H(+). It catalyses the reaction 2-(5Z,8Z,11Z,14Z-eicosatetraenoyl)-glycerol + H2O = glycerol + (5Z,8Z,11Z,14Z)-eicosatetraenoate + H(+). The enzyme catalyses 1-hexadecanoyl-sn-glycero-3-phosphate + H2O = sn-glycerol 3-phosphate + hexadecanoate + H(+). Inhibited by a series a OPs such as mipafox (MPX), phenyl saligenin phosphate (PSP), phenyl dipentyl phosphinate (PDPP), diisopropyl fluorophosphate and paraoxon. Its function is as follows. Phospholipase B that deacylates intracellular phosphatidylcholine (PtdCho), generating glycerophosphocholine (GroPtdCho). This deacylation occurs at both sn-2 and sn-1 positions of PtdCho. Catalyzes the hydrolysis of several naturally occurring membrane-associated lipids. Hydrolyzes lysophospholipids and monoacylglycerols, preferring the 1-acyl to the 2-acyl isomer. Does not catalyze hydrolysis of di- or triacylglycerols or fatty acid amides. The protein is Patatin-like phospholipase domain-containing protein 6 (PNPLA6) of Pongo abelii (Sumatran orangutan).